The primary structure comprises 920 residues: Disintegrin and metalloproteinase domain-containing protein 19 (920 aa).

A signal peptide spans 1–26; the sequence is MPGRAGVARFCLLALALQLHWPLAAC. Residues 27–204 constitute a propeptide that is removed on maturation; the sequence is EPGWTTRGSQ…TKKQPRRMKR (178 aa). Residues 27–703 are Extracellular-facing; that stretch reads EPGWTTRGSQ…VDSGPLPPKS (677 aa). The short motif at 131 to 138 is the Cysteine switch element; the sequence is STCRGIRG. Cys-133 provides a ligand contact to Zn(2+). Asn-145 carries N-linked (GlcNAc...) asparagine glycosylation. One can recognise a Peptidase M12B domain in the interval 211-409; that stretch reads KYVELYLVAD…GGGMCLSNMP (199 aa). 3 cysteine pairs are disulfide-bonded: Cys-321/Cys-404, Cys-361/Cys-388, and Cys-362/Cys-371. Position 346 (His-346) interacts with Zn(2+). The active site involves Glu-347. Residues His-350 and His-356 each coordinate Zn(2+). One can recognise a Disintegrin domain in the interval 417 to 503; the sequence is GRRCGNGYLE…HCPTNYYQMD (87 aa). N-linked (GlcNAc...) asparagine glycosylation is found at Asn-445 and Asn-448. Cys-475 and Cys-495 form a disulfide bridge. Asn-649 carries N-linked (GlcNAc...) asparagine glycosylation. Positions 654–686 constitute an EGF-like domain; that stretch reads ETEGCGKKCNGHGVCNNNKNCHCFPGWSPPFCN. 3 disulfide bridges follow: Cys-658-Cys-668, Cys-662-Cys-674, and Cys-676-Cys-685. A helical transmembrane segment spans residues 704 to 724; that stretch reads VGPVIAGVFSALFVLAVLVLL. The Cytoplasmic segment spans residues 725–920; it reads CHCYRQSHKL…RVGAIISSKI (196 aa). The tract at residues 755–920 is disordered; sequence SQSGGTGHAN…RVGAIISSKI (166 aa). The segment covering 767 to 783 has biased composition (polar residues); the sequence is FKLQTPQGKRKVTNTPE. Positions 825 to 834 are enriched in basic and acidic residues; it reads ARIERKESAR. Positions 835–846 match the SH3-binding motif; sequence RPPPSRPMPPAP. Composition is skewed to pro residues over residues 835–846 and 888–903; these read RPPPSRPMPPAP and TSGP…PVPK.

In terms of assembly, interacts with SH3PXD2A. Zn(2+) serves as cofactor. Post-translationally, the precursor is cleaved by a furin endopeptidase. As to expression, widely expressed, with the highest expression in bone, heart and lung, followed by brain and spleen and relatively low expression in liver, skeletal muscle, kidney and testis. In bone, primarily expressed in cell of the osteoblast lineage and not detected in mature osteoclasts.

The protein resides in the membrane. In terms of biological role, participates in the proteolytic processing of beta-type neuregulin isoforms which are involved in neurogenesis and synaptogenesis, suggesting a regulatory role in glial cell. Also cleaves alpha-2 macroglobulin. May be involved in osteoblast differentiation and/or osteoblast activity in bone. The polypeptide is Disintegrin and metalloproteinase domain-containing protein 19 (Adam19) (Mus musculus (Mouse)).